The chain runs to 315 residues: Epithelial cell adhesion molecule (315 aa).

Residues 1–23 (MAPPKALAFGLLLAVVTATLAAA) form the signal peptide. Residues 24–266 (QKDCVCNNYK…APEFSMQGLT (243 aa)) lie on the Extracellular side of the membrane. Cystine bridges form between Cys27–Cys46, Cys29–Cys59, Cys38–Cys48, Cys66–Cys99, Cys110–Cys116, and Cys118–Cys135. Positions 63-135 (ASKCLVMKAE…RTDKDTEITC (73 aa)) constitute a Thyroglobulin type-1 domain. Asn111 carries N-linked (GlcNAc...) asparagine glycosylation. N-linked (GlcNAc...) asparagine glycosylation is present at Asn198. A helical transmembrane segment spans residues 267-289 (AGIIAVIVVVVLAVIAGIVVLVI). The Cytoplasmic segment spans residues 290–315 (STRKRSAKYEKAEIKEMGEIHRELNA).

This sequence belongs to the EPCAM family. Monomer. Interacts with phosphorylated CLDN7. Post-translationally, glycosylation at Asn-198 is crucial for protein stability.

The protein resides in the lateral cell membrane. Its subcellular location is the cell junction. The protein localises to the tight junction. Its function is as follows. May act as a physical homophilic interaction molecule between intestinal epithelial cells (IECs) and intraepithelial lymphocytes (IELs) at the mucosal epithelium for providing immunological barrier as a first line of defense against mucosal infection. Plays a role in embryonic stem cells proliferation and differentiation. Up-regulates the expression of FABP5, MYC and cyclins A and E. In Rattus norvegicus (Rat), this protein is Epithelial cell adhesion molecule (Epcam).